A 499-amino-acid polypeptide reads, in one-letter code: Signal recognition particle subunit SRP54 2 (499 aa).

Residues Met1–Leu295 are G-domain. GTP contacts are provided by residues Gly108 to Thr115, Asp190 to Arg194, and Thr248 to Asp251. The segment at Gly296–Lys499 is M-domain.

This sequence belongs to the GTP-binding SRP family. SRP54 subfamily. In terms of assembly, component of a signal recognition particle (SRP) complex that consists of a 7SL RNA molecule of 300 nucleotides and six protein subunits: SRP72, SRP68, SRP54, SRP19, SRP14 and SRP9.

It localises to the cytoplasm. It is found in the endoplasmic reticulum. It carries out the reaction GTP + H2O = GDP + phosphate + H(+). In terms of biological role, component of the signal recognition particle (SRP) complex, a ribonucleoprotein complex that mediates the cotranslational targeting of secretory and membrane proteins to the endoplasmic reticulum (ER). As part of the SRP complex, associates with the SRP receptor (SR) component SRPRA to target secretory proteins to the endoplasmic reticulum membrane. Binds to the signal sequence of presecretory proteins when they emerge from the ribosomes. Displays basal GTPase activity, and stimulates reciprocal GTPase activation of the SR subunit SRPRA. Forms a guanosine 5'-triphosphate (GTP)-dependent complex with the SR subunit SRPRA. SR compaction and GTPase mediated rearrangement of SR drive SRP-mediated cotranslational protein translocation into the ER. Requires the presence of SRP9/SRP14 and/or SRP19 to stably interact with RNA. The chain is Signal recognition particle subunit SRP54 2 from Solanum lycopersicum (Tomato).